A 75-amino-acid polypeptide reads, in one-letter code: Putative membrane protein insertion efficiency factor 2 (75 aa).

This sequence belongs to the UPF0161 family.

The protein resides in the cell membrane. Could be involved in insertion of integral membrane proteins into the membrane. The protein is Putative membrane protein insertion efficiency factor 2 of Bacillus licheniformis (strain ATCC 14580 / DSM 13 / JCM 2505 / CCUG 7422 / NBRC 12200 / NCIMB 9375 / NCTC 10341 / NRRL NRS-1264 / Gibson 46).